Consider the following 281-residue polypeptide: LIM domain-containing protein G (281 aa).

LIM zinc-binding domains follow at residues 40 to 101 (LNCS…IKFN), 141 to 205 (DICT…SKQV), and 206 to 262 (NCFA…FTQP).

The sequence is that of LIM domain-containing protein G (limG) from Dictyostelium discoideum (Social amoeba).